A 488-amino-acid chain; its full sequence is Tetratricopeptide repeat protein 23 (488 aa).

5 TPR repeats span residues 45–78 (LHLCEERAKSYSSSREYKQAIQELVRCVALTRIC), 137–170 (LELFYTLGRALLSLQKFKDASENLIKAERLSKEM), 186–219 (SRIKLSFAQLYQGQKRSKEAFPFYQKALEYTEIT), 228–261 (VQVLRELAGVEQALGLYAAAISHFSRDRLPTPQP), and 398–431 (AETYRALGRADLAQGNNSGAYAKLKKCVQIETFL).

Associated with the EvC complex composed of EFCAB7, IQCE, EVC2 and EVC.

It is found in the cell projection. The protein localises to the cilium. Its function is as follows. Participates positively in the ciliary Hedgehog (Hh) signaling. The protein is Tetratricopeptide repeat protein 23 (Ttc23) of Mus musculus (Mouse).